We begin with the raw amino-acid sequence, 150 residues long: 3-hydroxyacyl-[acyl-carrier-protein] dehydratase FabZ (150 aa).

Residue His-57 is part of the active site.

The protein belongs to the thioester dehydratase family. FabZ subfamily.

It localises to the cytoplasm. It catalyses the reaction a (3R)-hydroxyacyl-[ACP] = a (2E)-enoyl-[ACP] + H2O. Involved in unsaturated fatty acids biosynthesis. Catalyzes the dehydration of short chain beta-hydroxyacyl-ACPs and long chain saturated and unsaturated beta-hydroxyacyl-ACPs. This chain is 3-hydroxyacyl-[acyl-carrier-protein] dehydratase FabZ, found in Mannheimia succiniciproducens (strain KCTC 0769BP / MBEL55E).